Here is a 461-residue protein sequence, read N- to C-terminus: CBL-interacting protein kinase 5 (461 aa).

The 255-residue stretch at 12-266 folds into the Protein kinase domain; it reads YELGRMLGQG…VEKLVEHPWF (255 aa). Residues 18-26 and Lys-41 each bind ATP; that span reads LGQGTFAKV. Asp-134 functions as the Proton acceptor in the catalytic mechanism. The segment at 152 to 181 is activation loop; it reads DFGLSAFKECQKQDGLLHTTCGTPAYVAPE. In terms of domain architecture, NAF spans 300–334; it reads EGKAKEPASSLKPVSLNAFDIISLSKGFDLSGLFE. Residues 340-369 are PPI; sequence KADSRFMTQKPASAIVSKLEQIAETESFKV. The disordered stretch occupies residues 440–461; that stretch reads HPSLAQSSTLTQSSKSISRHAI. Residues 442 to 455 show a composition bias toward low complexity; it reads SLAQSSTLTQSSKS.

Belongs to the protein kinase superfamily. CAMK Ser/Thr protein kinase family. SNF1 subfamily. Requires Mn(2+) as cofactor.

It catalyses the reaction L-seryl-[protein] + ATP = O-phospho-L-seryl-[protein] + ADP + H(+). The enzyme catalyses L-threonyl-[protein] + ATP = O-phospho-L-threonyl-[protein] + ADP + H(+). CIPK serine-threonine protein kinases interact with CBL proteins. Binding of a CBL protein to the regulatory NAF domain of CIPK protein lead to the activation of the kinase in a calcium-dependent manner. The chain is CBL-interacting protein kinase 5 (CIPK5) from Oryza sativa subsp. japonica (Rice).